The chain runs to 186 residues: Elongation factor P (186 aa).

Belongs to the elongation factor P family.

It is found in the cytoplasm. It functions in the pathway protein biosynthesis; polypeptide chain elongation. In terms of biological role, involved in peptide bond synthesis. Stimulates efficient translation and peptide-bond synthesis on native or reconstituted 70S ribosomes in vitro. Probably functions indirectly by altering the affinity of the ribosome for aminoacyl-tRNA, thus increasing their reactivity as acceptors for peptidyl transferase. This is Elongation factor P from Prochlorococcus marinus (strain MIT 9211).